We begin with the raw amino-acid sequence, 44 residues long: Thioredoxin (44 aa).

In terms of domain architecture, Thioredoxin spans isoleucine 2–glutamate 44. Cysteine 29 and cysteine 32 are disulfide-bonded.

Belongs to the thioredoxin family.

Its function is as follows. Participates in various redox reactions through the reversible oxidation of its active center dithiol to a disulfide and catalyzes dithiol-disulfide exchange reactions. In Tissierella creatinophila, this protein is Thioredoxin (trxA).